Reading from the N-terminus, the 599-residue chain is Nucleosomal histone kinase 1 (599 aa).

One can recognise a Protein kinase domain in the interval 47–328 (WRIGPSIGVG…PDYDKCRSWF (282 aa)). ATP contacts are provided by residues 53-61 (IGVGGFGEI) and Lys-77. Asp-183 functions as the Proton acceptor in the catalytic mechanism. Disordered regions lie at residues 340–507 (NGDL…PQPR) and 532–599 (RKKK…KYQG). A compositionally biased stretch (polar residues) spans 349–361 (PQTSSNNNLSPPG). Residues Ser-376, Ser-381, Ser-382, Ser-388, and Ser-390 each carry the phosphoserine modification. Over residues 435 to 448 (VKTEPKSTPRERAT) the composition is skewed to basic and acidic residues. The residue at position 483 (Ser-483) is a Phosphoserine. Low complexity predominate over residues 546-558 (SRTPSSRSALASS). A phosphoserine mark is found at Ser-564 and Ser-586. The residue at position 589 (Thr-589) is a Phosphothreonine.

It belongs to the protein kinase superfamily. CK1 Ser/Thr protein kinase family. VRK subfamily. In terms of assembly, may interact with Unc-89 (via protein kinase domain 1). Interacts with L(2)gl. Requires Mg(2+) as cofactor. In terms of processing, phosphorylated during mitosis and female meiosis. As to expression, expressed in ovaries (at protein level). Expressed in indirect flight muscle (IFM) (at protein level).

It localises to the cytoplasm. The protein resides in the nucleus. The protein localises to the chromosome. It is found in the myofibril. Its subcellular location is the sarcomere. It localises to the z line. The protein resides in the m line. It catalyses the reaction L-seryl-[protein] + ATP = O-phospho-L-seryl-[protein] + ADP + H(+). It carries out the reaction L-threonyl-[protein] + ATP = O-phospho-L-threonyl-[protein] + ADP + H(+). Functionally, serine/threonine-protein kinase involved in somatic mitosis and female meiosis. Required for spindle organization in mitosis, and for the establishment or maintenance of meiosis-specific chromosomal configurations, including the prophase I karyosome and the metaphase I spindle. Specifically phosphorylates nucleosomal H2A on 'Thr-119'. Required for the development and organization of indirect flight muscle sarcomeres by regulating the formation of M line and H zone and the correct assembly of thick and thin filaments in the sarcomere. The sequence is that of Nucleosomal histone kinase 1 (ball) from Drosophila melanogaster (Fruit fly).